A 218-amino-acid polypeptide reads, in one-letter code: 1-Cys peroxiredoxin PER1 (218 aa).

A Thioredoxin domain is found at 4–164; that stretch reads LTIGDTVPNL…VVRAVDSLLT (161 aa). Cysteine 46 acts as the Cysteine sulfenic acid (-SOH) intermediate in catalysis. Positions 194–217 match the Bipartite nuclear localization signal motif; sequence KKMFPQGFETADLPSKKGYLRFTK.

It belongs to the peroxiredoxin family. Prx6 subfamily. Embryo and aleurone cells.

The protein localises to the nucleus. It localises to the cytoplasm. It carries out the reaction a hydroperoxide + [thioredoxin]-dithiol = an alcohol + [thioredoxin]-disulfide + H2O. Functionally, thiol-specific peroxidase that catalyzes the reduction of hydrogen peroxide and organic hydroperoxides to water and alcohols, respectively. Seems to contribute to the inhibition of germination during stress. The protein is 1-Cys peroxiredoxin PER1 (PER1) of Hordeum vulgare (Barley).